The primary structure comprises 264 residues: NADH-quinone oxidoreductase subunit B 1 (264 aa).

[4Fe-4S] cluster-binding residues include C42, C43, C108, and C138.

Belongs to the complex I 20 kDa subunit family. NDH-1 is composed of 14 different subunits. Subunits NuoB, C, D, E, F, and G constitute the peripheral sector of the complex. It depends on [4Fe-4S] cluster as a cofactor.

The protein localises to the cell membrane. The enzyme catalyses a quinone + NADH + 5 H(+)(in) = a quinol + NAD(+) + 4 H(+)(out). NDH-1 shuttles electrons from NADH, via FMN and iron-sulfur (Fe-S) centers, to quinones in the respiratory chain. The immediate electron acceptor for the enzyme in this species is believed to be ubiquinone. Couples the redox reaction to proton translocation (for every two electrons transferred, four hydrogen ions are translocated across the cytoplasmic membrane), and thus conserves the redox energy in a proton gradient. This is NADH-quinone oxidoreductase subunit B 1 from Chloroflexus aurantiacus (strain ATCC 29366 / DSM 635 / J-10-fl).